We begin with the raw amino-acid sequence, 217 residues long: Adenylate kinase (217 aa).

ATP is bound at residue 11 to 16 (GAGKGT). Positions 31–60 (STGDMFREAMANKTPVGLEAKSYIDKGDLV) are NMP. AMP contacts are provided by residues T32, R37, 58-60 (DLV), 86-89 (GFPR), and Q93. The segment at 127-165 (ARFMCKNCGATYNKFSKKPKVEGTCDRCGGHEFYQREDD) is LID. R128 lines the ATP pocket. 2 residues coordinate Zn(2+): C131 and C134. 137-138 (TY) contacts ATP. Zn(2+)-binding residues include C151 and C154. The AMP site is built by R162 and R173. Q201 is a binding site for ATP.

It belongs to the adenylate kinase family. As to quaternary structure, monomer.

The protein resides in the cytoplasm. The enzyme catalyses AMP + ATP = 2 ADP. It functions in the pathway purine metabolism; AMP biosynthesis via salvage pathway; AMP from ADP: step 1/1. In terms of biological role, catalyzes the reversible transfer of the terminal phosphate group between ATP and AMP. Plays an important role in cellular energy homeostasis and in adenine nucleotide metabolism. This Lactobacillus delbrueckii subsp. bulgaricus (strain ATCC 11842 / DSM 20081 / BCRC 10696 / JCM 1002 / NBRC 13953 / NCIMB 11778 / NCTC 12712 / WDCM 00102 / Lb 14) protein is Adenylate kinase.